The chain runs to 323 residues: MASISQTNQFPCKTLSQNPPHNQFTSKPSILPLNSVRISRSLAKKSFLSIQGFTRARPLVLTRAADDDEWGPEKEKEGGGALAVAEEESPKEVTEIDNLKKALVDSFYGTDRGLNATSETRAEIVELITQLEAKNPTPAPTEALTLLNAKWILVYTSFSGLFPLLSRGTLPLARVEEISQTIDSENFTVQNSIQFAGPLATTSISTNAKFEVRSPKRVQIKFEEGVIGTPQVTDSLVLPENVEFLGQKIDLSPFKGILSSVQDTASSVAKTISSQPPLKFSISNSNAQSWLLTTYLDEDLRISRADAGSVFVFIKEGSPLLMP.

2 disordered regions span residues 1–28 and 66–88; these read MASI…TSKP and DDDE…AEEE. A chloroplast-targeting transit peptide spans 1–63; the sequence is MASISQTNQF…TRARPLVLTR (63 aa).

Belongs to the PAP/fibrillin family. Constitutively expressed in flowers, leaves, and fruits.

The protein localises to the plastid. The protein resides in the chloroplast. This is Plastid-lipid-associated protein, chloroplastic (PAP) from Citrus unshiu (Satsuma mandarin).